The following is a 394-amino-acid chain: NAD(P)H-quinone oxidoreductase subunit H (394 aa).

The protein belongs to the complex I 49 kDa subunit family. NDH-1 can be composed of about 15 different subunits; different subcomplexes with different compositions have been identified which probably have different functions.

It is found in the cellular thylakoid membrane. It carries out the reaction a plastoquinone + NADH + (n+1) H(+)(in) = a plastoquinol + NAD(+) + n H(+)(out). It catalyses the reaction a plastoquinone + NADPH + (n+1) H(+)(in) = a plastoquinol + NADP(+) + n H(+)(out). Its function is as follows. NDH-1 shuttles electrons from an unknown electron donor, via FMN and iron-sulfur (Fe-S) centers, to quinones in the respiratory and/or the photosynthetic chain. The immediate electron acceptor for the enzyme in this species is believed to be plastoquinone. Couples the redox reaction to proton translocation, and thus conserves the redox energy in a proton gradient. Cyanobacterial NDH-1 also plays a role in inorganic carbon-concentration. The polypeptide is NAD(P)H-quinone oxidoreductase subunit H (Prochlorococcus marinus (strain MIT 9313)).